The primary structure comprises 131 residues: Fluoride-specific ion channel FluC 2 (131 aa).

4 helical membrane-spanning segments follow: residues 5–25 (SAVF…NLWI), 35–55 (WLEN…FMIG), 59–79 (PLLS…MSTF), and 95–115 (LLYV…GVFV). Glycine 71 and threonine 74 together coordinate Na(+).

The protein belongs to the fluoride channel Fluc/FEX (TC 1.A.43) family.

The protein localises to the cell membrane. It carries out the reaction fluoride(in) = fluoride(out). Its activity is regulated as follows. Na(+) is not transported, but it plays an essential structural role and its presence is essential for fluoride channel function. Fluoride-specific ion channel. Important for reducing fluoride concentration in the cell, thus reducing its toxicity. In Bacillus subtilis (strain 168), this protein is Fluoride-specific ion channel FluC 2.